We begin with the raw amino-acid sequence, 586 residues long: Phosphomethylpyrimidine synthase (586 aa).

The disordered stretch occupies residues 1 to 58; it reads MKQSVSAEQIELKSSLPGSKKVYVDGPREGMKVPMREIEQSDTNGVPNPPIRVYDTSG. Over residues 22 to 39 the composition is skewed to basic and acidic residues; that stretch reads VYVDGPREGMKVPMREIE. Substrate contacts are provided by residues N193, M222, Y251, H287, 307–309, 348–351, and E387; these read SRG and DGLR. Position 391 (H391) interacts with Zn(2+). A substrate-binding site is contributed by Y414. H455 contributes to the Zn(2+) binding site. Positions 535, 538, and 543 each coordinate [4Fe-4S] cluster.

It belongs to the ThiC family. [4Fe-4S] cluster is required as a cofactor.

It carries out the reaction 5-amino-1-(5-phospho-beta-D-ribosyl)imidazole + S-adenosyl-L-methionine = 4-amino-2-methyl-5-(phosphooxymethyl)pyrimidine + CO + 5'-deoxyadenosine + formate + L-methionine + 3 H(+). The protein operates within cofactor biosynthesis; thiamine diphosphate biosynthesis. Catalyzes the synthesis of the hydroxymethylpyrimidine phosphate (HMP-P) moiety of thiamine from aminoimidazole ribotide (AIR) in a radical S-adenosyl-L-methionine (SAM)-dependent reaction. The polypeptide is Phosphomethylpyrimidine synthase (Bacillus anthracis (strain A0248)).